The following is a 119-amino-acid chain: Protein Wnt-4 (119 aa).

Residue Ser1 is the site of O-palmitoleoyl serine; by PORCN attachment. 2 cysteine pairs are disulfide-bonded: Cys69–Cys100 and Cys85–Cys95. Asn86 is a glycosylation site (N-linked (GlcNAc...) asparagine).

It belongs to the Wnt family. Post-translationally, palmitoleoylation is required for efficient binding to frizzled receptors. Depalmitoleoylation leads to Wnt signaling pathway inhibition.

The protein localises to the secreted. It is found in the extracellular space. Its subcellular location is the extracellular matrix. Its function is as follows. Ligand for members of the frizzled family of seven transmembrane receptors. Plays an important role in embryonic development. This is Protein Wnt-4 (WNT-4) from Eptatretus stoutii (Pacific hagfish).